Consider the following 391-residue polypeptide: Formate-dependent phosphoribosylglycinamide formyltransferase (391 aa).

N(1)-(5-phospho-beta-D-ribosyl)glycinamide contacts are provided by residues 20–21 (EL) and Glu-80. ATP is bound by residues Arg-112, Lys-153, 158–163 (SSGKGQ), 193–196 (EGFI), and Glu-201. The ATP-grasp domain occupies 117-306 (RLAAEELDLS…EFALHVRAFT (190 aa)). Positions 265 and 277 each coordinate Mg(2+). N(1)-(5-phospho-beta-D-ribosyl)glycinamide-binding positions include Asp-284, Lys-354, and 361–362 (RR).

The protein belongs to the PurK/PurT family. In terms of assembly, homodimer.

It catalyses the reaction N(1)-(5-phospho-beta-D-ribosyl)glycinamide + formate + ATP = N(2)-formyl-N(1)-(5-phospho-beta-D-ribosyl)glycinamide + ADP + phosphate + H(+). It functions in the pathway purine metabolism; IMP biosynthesis via de novo pathway; N(2)-formyl-N(1)-(5-phospho-D-ribosyl)glycinamide from N(1)-(5-phospho-D-ribosyl)glycinamide (formate route): step 1/1. Its function is as follows. Involved in the de novo purine biosynthesis. Catalyzes the transfer of formate to 5-phospho-ribosyl-glycinamide (GAR), producing 5-phospho-ribosyl-N-formylglycinamide (FGAR). Formate is provided by PurU via hydrolysis of 10-formyl-tetrahydrofolate. The protein is Formate-dependent phosphoribosylglycinamide formyltransferase of Vibrio parahaemolyticus serotype O3:K6 (strain RIMD 2210633).